The sequence spans 614 residues: Sodium- and chloride-dependent betaine transporter (614 aa).

The Cytoplasmic segment spans residues 1–44 (MDRKVAVHEDGYPVVSWVPEEGEMMDQKGKDQVKDRGQWTNKME). Helical transmembrane passes span 45–65 (FVLS…FPYL), 73–92 (AFFI…VFFL), and 117–137 (GIGM…IIIL). At 138–210 (AWALFYLFSS…SGIHDLGSLR (73 aa)) the chain is on the extracellular side. A disulfide bridge connects residues cysteine 157 and cysteine 166. Asparagine 171 and asparagine 183 each carry an N-linked (GlcNAc...) asparagine glycan. Helical transmembrane passes span 211 to 229 (WELA…FCIW), 238 to 255 (VVYF…ILLI), 291 to 308 (IFFS…LGSY), 320 to 341 (IALC…FSIL), 374 to 393 (MPLS…FLGL), 423 to 441 (VLIL…LLVT), 458 to 478 (GICL…VYGA), 499 to 518 (ISWL…FSLS), and 538 to 556 (IGWL…FIII). Residues 557-614 (TFLKTQGSFKKRLRRLITPDPSLPQPGRRPPQDGSSAQNCSSSPAKQELIAWEKETHL) lie on the Cytoplasmic side of the membrane. The interval 574–602 (TPDPSLPQPGRRPPQDGSSAQNCSSSPAK) is disordered. Positions 589–601 (DGSSAQNCSSSPA) are enriched in polar residues.

The protein belongs to the sodium:neurotransmitter symporter (SNF) (TC 2.A.22) family. SLC6A12 subfamily. In terms of assembly, interacts with LIN7C. As to expression, predominantly expressed in the liver (sinusoidal hepatocyte plasma membranes), also present in the renal medulla, where it localizes to the basolateral membranes of collecting ducts (particularly at the papilla tip) and the thick ascending limbs of Henle (at protein level). Some expression is detected in the leptomeninges, but no expression is detected in brain parenchyma, brain blood vessels, ependymal cells, the renal cortex and the intestine.

It is found in the basolateral cell membrane. The protein resides in the cell membrane. It catalyses the reaction 4-aminobutanoate(out) + chloride(out) + 3 Na(+)(out) = 4-aminobutanoate(in) + chloride(in) + 3 Na(+)(in). The catalysed reaction is glycine betaine(out) + 2 chloride(out) + 3 Na(+)(out) = glycine betaine(in) + 2 chloride(in) + 3 Na(+)(in). In terms of biological role, transporter that mediates cellular uptake of betaine and GABA in a sodium- and chloride-dependent process. May have a role in regulation of GABAergic transmission in the brain through the reuptake of GABA into presynaptic terminals, as well as in osmotic regulation. Probably also involved in renal and hepatic osmotic regulation. This is Sodium- and chloride-dependent betaine transporter (Slc6a12) from Mus musculus (Mouse).